We begin with the raw amino-acid sequence, 203 residues long: Large ribosomal subunit protein bL25 (203 aa).

This sequence belongs to the bacterial ribosomal protein bL25 family. CTC subfamily. In terms of assembly, part of the 50S ribosomal subunit; part of the 5S rRNA/L5/L18/L25 subcomplex. Contacts the 5S rRNA. Binds to the 5S rRNA independently of L5 and L18.

Its function is as follows. This is one of the proteins that binds to the 5S RNA in the ribosome where it forms part of the central protuberance. The chain is Large ribosomal subunit protein bL25 from Cupriavidus pinatubonensis (strain JMP 134 / LMG 1197) (Cupriavidus necator (strain JMP 134)).